The chain runs to 190 residues: ATP-dependent Clp protease proteolytic subunit 2 (190 aa).

The active-site Nucleophile is serine 98. Histidine 123 is a catalytic residue.

Belongs to the peptidase S14 family. In terms of assembly, fourteen ClpP subunits assemble into 2 heptameric rings which stack back to back to give a disk-like structure with a central cavity, resembling the structure of eukaryotic proteasomes.

The protein resides in the cytoplasm. It carries out the reaction Hydrolysis of proteins to small peptides in the presence of ATP and magnesium. alpha-casein is the usual test substrate. In the absence of ATP, only oligopeptides shorter than five residues are hydrolyzed (such as succinyl-Leu-Tyr-|-NHMec, and Leu-Tyr-Leu-|-Tyr-Trp, in which cleavage of the -Tyr-|-Leu- and -Tyr-|-Trp bonds also occurs).. Its function is as follows. Cleaves peptides in various proteins in a process that requires ATP hydrolysis. Has a chymotrypsin-like activity. Plays a major role in the degradation of misfolded proteins. The protein is ATP-dependent Clp protease proteolytic subunit 2 of Bacillus licheniformis (strain ATCC 14580 / DSM 13 / JCM 2505 / CCUG 7422 / NBRC 12200 / NCIMB 9375 / NCTC 10341 / NRRL NRS-1264 / Gibson 46).